The sequence spans 274 residues: MSSLIKEVEEAWQIKDKLLQDSSKLITLKQTLNDSIESLNQGTVRVCEKKENSWHVNEWVKKAILLYFITTESQLYNNNYNSWYDKVAPKFSADTDKNTFKEAAIRTVPGAIVRTGAYIAKNVVIMPSFINIGAYIDEGTMIDTWATIGSCAQIGKNCHISGGTGIGGVLEPLHAKPVIIEDNCFIGARSEIAEGVIVEEGAVISMGVFIGSSTKIVYRDTGEIIYGRIPAYSVVVPGVLPAKETGKPGLYCVVIVKQVDKTTRAKVRINDLLR.

Positions 106 and 143 each coordinate substrate.

This sequence belongs to the transferase hexapeptide repeat family. As to quaternary structure, homotrimer.

The protein resides in the cytoplasm. The enzyme catalyses (S)-2,3,4,5-tetrahydrodipicolinate + succinyl-CoA + H2O = (S)-2-succinylamino-6-oxoheptanedioate + CoA. It participates in amino-acid biosynthesis; L-lysine biosynthesis via DAP pathway; LL-2,6-diaminopimelate from (S)-tetrahydrodipicolinate (succinylase route): step 1/3. This is 2,3,4,5-tetrahydropyridine-2,6-dicarboxylate N-succinyltransferase from Rickettsia rickettsii (strain Sheila Smith).